Here is a 228-residue protein sequence, read N- to C-terminus: Small ribosomal subunit protein uS7m (228 aa).

Residues 1–33 constitute a mitochondrion transit peptide; the sequence is MAASVRHLLKPWTPSLCLMRWSRYNPYYLDPEP.

It belongs to the universal ribosomal protein uS7 family. As to quaternary structure, component of the mitochondrial ribosome small subunit (28S) which comprises a 12S rRNA and about 30 distinct proteins.

Its subcellular location is the mitochondrion. This chain is Small ribosomal subunit protein uS7m (mrps7), found in Danio rerio (Zebrafish).